The sequence spans 1089 residues: PALM2-AKAP2 fusion protein (1089 aa).

Residues serine 70–isoleucine 107 are a coiled coil. 3 disordered regions span residues serine 165 to histidine 194, proline 210 to asparagine 231, and proline 289 to glycine 362. A compositionally biased stretch (basic and acidic residues) spans serine 173–leucine 183. 2 positions are modified to phosphoserine: arginine 315 and serine 318. Basic and acidic residues predominate over residues proline 317–asparagine 328. Residues glycine 329–alanine 347 show a composition bias toward polar residues. Position 348 is a phosphoserine (serine 348). The span at serine 348–cysteine 357 shows a compositional bias: low complexity. Lysine 370 is covalently cross-linked (Glycyl lysine isopeptide (Lys-Gly) (interchain with G-Cter in SUMO1); alternate). Lysine 370 is covalently cross-linked (Glycyl lysine isopeptide (Lys-Gly) (interchain with G-Cter in SUMO2); alternate). The interval lysine 429–proline 517 is disordered. The segment covering leucine 455–glutamine 470 has biased composition (basic and acidic residues). Residues glutamine 471–leucine 508 show a composition bias toward low complexity. Serine 553 is subject to Phosphoserine. The tract at residues threonine 592–leucine 644 is disordered. Phosphoserine is present on residues serine 678, serine 682, and serine 734. Positions phenylalanine 712–proline 749 are enriched in polar residues. 3 disordered regions span residues phenylalanine 712 to glutamate 783, glutamate 800 to lysine 899, and threonine 915 to threonine 934. Threonine 743 is subject to Phosphothreonine. The segment at leucine 782–glutamine 795 is PKA-RII subunit binding domain. Basic and acidic residues predominate over residues glutamine 801–serine 814. Serine 847 carries the post-translational modification Phosphoserine. The segment covering glutamine 850 to glycine 871 has biased composition (basic and acidic residues). The stretch at arginine 928–valine 958 forms a coiled coil. Phosphoserine is present on residues serine 936, serine 964, serine 995, and serine 1002. Positions glutamine 946–leucine 1021 are disordered.

In terms of tissue distribution, highly expressed in lung and weakly in thymus and cerebellum. Little or no expression in liver, heart and cerebral cortex. All isoforms are expressed in lung, but KL2A and KL2B isoforms are the principal isoforms in cerebellum.

It localises to the apical cell membrane. Binds to regulatory subunit (RII) of protein kinase A. May be involved in establishing polarity in signaling systems or in integrating PKA-RII isoforms with downstream effectors to capture, amplify and focus diffuse, trans-cellular signals carried by cAMP. Binds tp and modulates the structure of the actin cytoskeleton. The chain is PALM2-AKAP2 fusion protein from Mus musculus (Mouse).